The chain runs to 154 residues: MPVDPEKLAKLQKAAAKKVGGSRVKAKKVVKTEQDDTKLIEALGKLKATKIENVEEANFFREDGKVLHFNRVGVQGAAASNTFAFTGYPQEKNVTQLIPQILPQLGAENLEILRQLAEQLQAGKAPTELNAGAPAGGDEGIPDLIDGEKFDEVE.

One can recognise an NAC-A/B domain in the interval 33-98 (EQDDTKLIEA…PQEKNVTQLI (66 aa)). Residues 125 to 154 (APTELNAGAPAGGDEGIPDLIDGEKFDEVE) form a disordered region.

Belongs to the NAC-beta family. In terms of assembly, part of the nascent polypeptide-associated complex (NAC), consisting of EGD2 and EGD1. NAC associates with ribosomes via EGD1.

The protein localises to the cytoplasm. Its subcellular location is the nucleus. Its function is as follows. Component of the nascent polypeptide-associated complex (NAC), a dynamic component of the ribosomal exit tunnel, protecting the emerging polypeptides from interaction with other cytoplasmic proteins to ensure appropriate nascent protein targeting. The NAC complex also promotes mitochondrial protein import by enhancing productive ribosome interactions with the outer mitochondrial membrane and blocks the inappropriate interaction of ribosomes translating non-secretory nascent polypeptides with translocation sites in the membrane of the endoplasmic reticulum. EGD1 may act as a transcription factor that exert a negative effect on the expression of several genes that are transcribed by RNA polymerase II. This chain is Nascent polypeptide-associated complex subunit beta (EGD1), found in Scheffersomyces stipitis (strain ATCC 58785 / CBS 6054 / NBRC 10063 / NRRL Y-11545) (Yeast).